Consider the following 427-residue polypeptide: Glutamate-1-semialdehyde 2,1-aminomutase (427 aa).

An N6-(pyridoxal phosphate)lysine modification is found at K265.

Belongs to the class-III pyridoxal-phosphate-dependent aminotransferase family. HemL subfamily. In terms of assembly, homodimer. It depends on pyridoxal 5'-phosphate as a cofactor.

It localises to the cytoplasm. The enzyme catalyses (S)-4-amino-5-oxopentanoate = 5-aminolevulinate. Its pathway is porphyrin-containing compound metabolism; protoporphyrin-IX biosynthesis; 5-aminolevulinate from L-glutamyl-tRNA(Glu): step 2/2. This is Glutamate-1-semialdehyde 2,1-aminomutase from Bordetella petrii (strain ATCC BAA-461 / DSM 12804 / CCUG 43448).